The primary structure comprises 235 residues: Large ribosomal subunit protein uL3 (235 aa).

It belongs to the universal ribosomal protein uL3 family. Part of the 50S ribosomal subunit. Forms a cluster with proteins L14 and L19.

In terms of biological role, one of the primary rRNA binding proteins, it binds directly near the 3'-end of the 23S rRNA, where it nucleates assembly of the 50S subunit. The protein is Large ribosomal subunit protein uL3 of Frankia casuarinae (strain DSM 45818 / CECT 9043 / HFP020203 / CcI3).